A 250-amino-acid chain; its full sequence is tRNA:m(4)X modification enzyme TRM13 (250 aa).

Residues 1–10 are compositionally biased toward basic residues; that stretch reads MGRAPAKRKP. The interval 1 to 20 is disordered; sequence MGRAPAKRKPSSPPPPPPPG. A compositionally biased stretch (pro residues) spans 11–20; it reads SSPPPPPPPG. The CHHC U11-48K-type zinc-finger motif lies at 62–89; that stretch reads LVPCPVDPSHTVLEENLEAHVGKCPLKK. Residues C65, H71, H81, and C85 each contribute to the Zn(2+) site.

Belongs to the methyltransferase TRM13 family.

It is found in the nucleus. It localises to the cytoplasm. The enzyme catalyses cytidine(4) in tRNA(Pro) + S-adenosyl-L-methionine = 2'-O-methylcytidine(4) in tRNA(Pro) + S-adenosyl-L-homocysteine + H(+). The catalysed reaction is cytidine(4) in tRNA(Gly)(GCC) + S-adenosyl-L-methionine = 2'-O-methylcytidine(4) in tRNA(Gly)(GCC) + S-adenosyl-L-homocysteine + H(+). It catalyses the reaction adenosine(4) in tRNA(His) + S-adenosyl-L-methionine = 2'-O-methyladenosine(4) in tRNA(His) + S-adenosyl-L-homocysteine + H(+). TRNA methylase that catalyzes 2'-O-methyladenosine (Am) nucleoside formation on tRNA(Gly)(GCC) in vitro. May 2'-O-methylate cytidine(4) in tRNA(Pro) and tRNA(Gly)(GCC), and adenosine(4) in tRNA(His). Involved in salt stress tolerance. The protein is tRNA:m(4)X modification enzyme TRM13 of Oryza sativa subsp. japonica (Rice).